A 144-amino-acid chain; its full sequence is Large ribosomal subunit protein uL15 (144 aa).

The tract at residues 1–53 (MRLNTLSPAEGAKHSAKRLGRGIGSGLGKTGGRGHKGQKSRTGGGVRRGFEGG) is disordered. Positions 21–31 (RGIGSGLGKTG) are enriched in gly residues.

This sequence belongs to the universal ribosomal protein uL15 family. As to quaternary structure, part of the 50S ribosomal subunit.

Its function is as follows. Binds to the 23S rRNA. In Haemophilus influenzae (strain ATCC 51907 / DSM 11121 / KW20 / Rd), this protein is Large ribosomal subunit protein uL15.